A 404-amino-acid polypeptide reads, in one-letter code: Cysteine desulfurase IscS (404 aa).

Residues alanine 75 to threonine 76, asparagine 155, glutamine 183, and serine 203 to histidine 205 contribute to the pyridoxal 5'-phosphate site. Position 206 is an N6-(pyridoxal phosphate)lysine (lysine 206). Threonine 243 is a binding site for pyridoxal 5'-phosphate. The active-site Cysteine persulfide intermediate is cysteine 328. Residue cysteine 328 participates in [2Fe-2S] cluster binding.

This sequence belongs to the class-V pyridoxal-phosphate-dependent aminotransferase family. NifS/IscS subfamily. As to quaternary structure, homodimer. Forms a heterotetramer with IscU, interacts with other sulfur acceptors. It depends on pyridoxal 5'-phosphate as a cofactor.

The protein localises to the cytoplasm. The catalysed reaction is (sulfur carrier)-H + L-cysteine = (sulfur carrier)-SH + L-alanine. It functions in the pathway cofactor biosynthesis; iron-sulfur cluster biosynthesis. In terms of biological role, master enzyme that delivers sulfur to a number of partners involved in Fe-S cluster assembly, tRNA modification or cofactor biosynthesis. Catalyzes the removal of elemental sulfur atoms from cysteine to produce alanine. Functions as a sulfur delivery protein for Fe-S cluster synthesis onto IscU, an Fe-S scaffold assembly protein, as well as other S acceptor proteins. This chain is Cysteine desulfurase IscS, found in Pseudomonas fluorescens (strain SBW25).